The following is a 332-amino-acid chain: Fructose-1,6-bisphosphatase class 1 (332 aa).

Mg(2+) contacts are provided by Glu89, Asp110, Leu112, and Asp113. Substrate-binding positions include 113–116 (DGSS), Asn206, Tyr239, 257–259 (YLY), and Lys269. Glu275 lines the Mg(2+) pocket.

This sequence belongs to the FBPase class 1 family. In terms of assembly, homotetramer. Mg(2+) serves as cofactor.

It localises to the cytoplasm. The enzyme catalyses beta-D-fructose 1,6-bisphosphate + H2O = beta-D-fructose 6-phosphate + phosphate. The protein operates within carbohydrate biosynthesis; gluconeogenesis. This Cronobacter sakazakii (strain ATCC BAA-894) (Enterobacter sakazakii) protein is Fructose-1,6-bisphosphatase class 1.